The primary structure comprises 287 residues: Bifunctional protein FolD (287 aa).

NADP(+) is bound by residues Gly-167 to Ser-169 and Thr-192.

The protein belongs to the tetrahydrofolate dehydrogenase/cyclohydrolase family. As to quaternary structure, homodimer.

It catalyses the reaction (6R)-5,10-methylene-5,6,7,8-tetrahydrofolate + NADP(+) = (6R)-5,10-methenyltetrahydrofolate + NADPH. The catalysed reaction is (6R)-5,10-methenyltetrahydrofolate + H2O = (6R)-10-formyltetrahydrofolate + H(+). Its pathway is one-carbon metabolism; tetrahydrofolate interconversion. Its function is as follows. Catalyzes the oxidation of 5,10-methylenetetrahydrofolate to 5,10-methenyltetrahydrofolate and then the hydrolysis of 5,10-methenyltetrahydrofolate to 10-formyltetrahydrofolate. The sequence is that of Bifunctional protein FolD from Sorangium cellulosum (strain So ce56) (Polyangium cellulosum (strain So ce56)).